Consider the following 238-residue polypeptide: Thymidine kinase, cytosolic (238 aa).

At Ser2 the chain carries N-acetylserine. Ser2 and Ser13 each carry phosphoserine. ATP is bound by residues 26–33, 58–60, and 97–100; these read GPMFSGKS, DTR, and DEGQ. Glu98 functions as the Proton acceptor in the catalytic mechanism. A substrate-binding site is contributed by Phe128. 2 residues coordinate Zn(2+): Cys153 and Cys156. Residues 172–176 and Tyr181 each bind substrate; that span reads VEVIG. Cys185 and Cys188 together coordinate Zn(2+). Positions 206–208 match the KEN box motif; sequence KEN. The residue at position 235 (Ser235) is a Phosphoserine.

It belongs to the thymidine kinase family. Homotetramer. Tetramerization from dimerization is induced by ATP and increases catalytic efficiency due to a high affinity for thymidine. Tetramerization is inhibited by phosphorylation at Ser-13. Interacts (via the KEN box) with FZR1. Phosphorylated on Ser-13 in mitosis. Phosphorylation of Ser-13 by CDK1 during mitosis reduces homotetramerization and catalytic efficiency when DNA replication is complete and intracellular TK1 is still present at a high level. Post-translationally, polyubiquitinated. Postmitosis, ubiquitination leads to proteasomal degradation. The KEN box sequence located at the C-terminal region targets for degradation by the anaphase promoting complex (APC/C) activated and rate-limited by FZR1.

It localises to the cytoplasm. The enzyme catalyses thymidine + ATP = dTMP + ADP + H(+). Functionally, cell-cycle-regulated enzyme of importance in nucleotide metabolism. Catalyzes the first enzymatic step in the salvage pathway converting thymidine into thymidine monophosphate. Transcriptional regulation limits expression to the S phase of the cell cycle and transient expression coincides with the oscillation in the intracellular dTTP concentration. This chain is Thymidine kinase, cytosolic (TK1), found in Bos taurus (Bovine).